The following is a 326-amino-acid chain: MPLDTKQQKWLPLGLNPQACVQDKATEYFRPGIPFPELGKVYAAEHQFRYLQPPFQALLSRYDQQSCGKQVSCLNGRSSNGAAPEGALKSSRKRFIVFDQSGEQTRLLQCGFPLRFPSSMDAERGNILGALHPEKGFSKDHAIQEKILQHEDHENGEEDSEMHEDTEEINALLYSDDDDNDDWESDDEVMSTGHSPFTVEQQACNITTEELDETESTVDGPLLKRQKLLDHSYRDSSPSLVGTTKVKGLSDENLPESNISSKQETGSGLSDEQSRKDKIHTALRILESVVPGAKGKEALLLLDEAIDYLKLLKQSLNSSKGLNNHW.

The segment covering serine 175–valine 189 has biased composition (acidic residues). 2 disordered regions span residues serine 175–histidine 194 and arginine 234–arginine 275. Residues proline 255–aspartate 271 show a composition bias toward polar residues. Positions glutamine 263–leucine 312 constitute a bHLH domain.

As to quaternary structure, homodimer.

The protein localises to the nucleus. This Arabidopsis thaliana (Mouse-ear cress) protein is Transcription factor bHLH143 (BHLH143).